The sequence spans 350 residues: Phosphotriesterase-related protein (350 aa).

6 residues coordinate a divalent metal cation: histidine 22, histidine 24, glutamate 169, histidine 201, histidine 230, and aspartate 298.

It belongs to the metallo-dependent hydrolases superfamily. Phosphotriesterase family. A divalent metal cation is required as a cofactor.

The polypeptide is Phosphotriesterase-related protein (Drosophila melanogaster (Fruit fly)).